Here is a 216-residue protein sequence, read N- to C-terminus: LexA repressor (216 aa).

The H-T-H motif DNA-binding region spans 28-48 (RAEIAAELGFSSANSAEEHLR). Residues Ser-134 and Lys-171 each act as for autocatalytic cleavage activity in the active site.

The protein belongs to the peptidase S24 family. As to quaternary structure, homodimer.

The catalysed reaction is Hydrolysis of Ala-|-Gly bond in repressor LexA.. Represses a number of genes involved in the response to DNA damage (SOS response), including recA and lexA. In the presence of single-stranded DNA, RecA interacts with LexA causing an autocatalytic cleavage which disrupts the DNA-binding part of LexA, leading to derepression of the SOS regulon and eventually DNA repair. The protein is LexA repressor of Paraburkholderia phytofirmans (strain DSM 17436 / LMG 22146 / PsJN) (Burkholderia phytofirmans).